The sequence spans 564 residues: Ribulokinase (564 aa).

Belongs to the ribulokinase family.

It carries out the reaction D-ribulose + ATP = D-ribulose 5-phosphate + ADP + H(+). The catalysed reaction is L-ribulose + ATP = L-ribulose 5-phosphate + ADP + H(+). Its pathway is carbohydrate degradation; L-arabinose degradation via L-ribulose; D-xylulose 5-phosphate from L-arabinose (bacterial route): step 2/3. This Geobacillus thermodenitrificans (strain NG80-2) protein is Ribulokinase.